The chain runs to 264 residues: Proteasome subunit alpha type-4 (264 aa).

This sequence belongs to the peptidase T1A family. The 26S proteasome consists of a 20S proteasome core and two 19S regulatory subunits. The 20S proteasome core is composed of 28 subunits that are arranged in four stacked rings, resulting in a barrel-shaped structure. The two end rings are each formed by seven alpha subunits, and the two central rings are each formed by seven beta subunits. The catalytic chamber with the active sites is on the inside of the barrel. Interacts with PI31.

Its subcellular location is the cytoplasm. The protein resides in the nucleus. Functionally, the proteasome is a multicatalytic proteinase complex which is characterized by its ability to cleave peptides with Arg, Phe, Tyr, Leu, and Glu adjacent to the leaving group at neutral or slightly basic pH. The proteasome has an ATP-dependent proteolytic activity. This Drosophila melanogaster (Fruit fly) protein is Proteasome subunit alpha type-4 (Prosalpha3).